The following is a 758-amino-acid chain: 5-methyltetrahydropteroyltriglutamate--homocysteine methyltransferase (758 aa).

5-methyltetrahydropteroyltri-L-glutamate contacts are provided by residues 17 to 20 (RELK) and Lys117. L-homocysteine-binding positions include 434–436 (IGS) and Glu487. L-methionine contacts are provided by residues 434–436 (IGS) and Glu487. Residues 518–519 (RC) and Trp564 each bind 5-methyltetrahydropteroyltri-L-glutamate. Asp602 contacts L-homocysteine. Asp602 contributes to the L-methionine binding site. Glu608 is a binding site for 5-methyltetrahydropteroyltri-L-glutamate. Positions 644, 646, and 668 each coordinate Zn(2+). The active-site Proton donor is the His697. Cys729 is a binding site for Zn(2+).

The protein belongs to the vitamin-B12 independent methionine synthase family. It depends on Zn(2+) as a cofactor.

It carries out the reaction 5-methyltetrahydropteroyltri-L-glutamate + L-homocysteine = tetrahydropteroyltri-L-glutamate + L-methionine. It functions in the pathway amino-acid biosynthesis; L-methionine biosynthesis via de novo pathway; L-methionine from L-homocysteine (MetE route): step 1/1. Functionally, catalyzes the transfer of a methyl group from 5-methyltetrahydrofolate to homocysteine resulting in methionine formation. This Yersinia pseudotuberculosis serotype O:1b (strain IP 31758) protein is 5-methyltetrahydropteroyltriglutamate--homocysteine methyltransferase.